The following is a 139-amino-acid chain: uncharacterized protein (139 aa).

In terms of domain architecture, HIT spans isoleucine 3–isoleucine 110. Residues histidine 95–histidine 99 carry the Histidine triad motif motif.

This is an uncharacterized protein from Saccharolobus solfataricus (strain ATCC 35092 / DSM 1617 / JCM 11322 / P2) (Sulfolobus solfataricus).